Consider the following 84-residue polypeptide: Small ribosomal subunit protein uS15 (84 aa).

This sequence belongs to the universal ribosomal protein uS15 family. As to quaternary structure, part of the 30S ribosomal subunit. Forms a bridge to the 50S subunit in the 70S ribosome, contacting the 23S rRNA.

Functionally, one of the primary rRNA binding proteins, it binds directly to 16S rRNA where it helps nucleate assembly of the platform of the 30S subunit by binding and bridging several RNA helices of the 16S rRNA. In terms of biological role, forms an intersubunit bridge (bridge B4) with the 23S rRNA of the 50S subunit in the ribosome. This is Small ribosomal subunit protein uS15 from Thermosipho africanus (strain TCF52B).